The following is a 673-amino-acid chain: DNA ligase (673 aa).

NAD(+) is bound by residues 32–36, 81–82, and Glu111; these read DHVYD and SL. Residue Lys113 is the N6-AMP-lysine intermediate of the active site. NAD(+) contacts are provided by Arg134, Glu171, Lys286, and Lys310. The Zn(2+) site is built by Cys404, Cys407, Cys422, and Cys428. In terms of domain architecture, BRCT spans 595–673; that stretch reads NIIDEYKNKT…NEFWKKDNNF (79 aa).

Belongs to the NAD-dependent DNA ligase family. LigA subfamily. Mg(2+) serves as cofactor. Mn(2+) is required as a cofactor.

It carries out the reaction NAD(+) + (deoxyribonucleotide)n-3'-hydroxyl + 5'-phospho-(deoxyribonucleotide)m = (deoxyribonucleotide)n+m + AMP + beta-nicotinamide D-nucleotide.. In terms of biological role, DNA ligase that catalyzes the formation of phosphodiester linkages between 5'-phosphoryl and 3'-hydroxyl groups in double-stranded DNA using NAD as a coenzyme and as the energy source for the reaction. It is essential for DNA replication and repair of damaged DNA. The polypeptide is DNA ligase (Ureaplasma urealyticum serovar 10 (strain ATCC 33699 / Western)).